Consider the following 1423-residue polypeptide: Fructan beta-fructosidase (1423 aa).

An N-terminal signal peptide occupies residues 1–39 (MEEETVCKNWFMRKSGKSWIFGCAVFFVLGLATALPVAA). Positions 44–161 (QTTAADTAVT…TNLEDMSHDT (118 aa)) are disordered. Polar residues predominate over residues 69 to 126 (AVTETTQSEGTASKQLTTPAVADQTTEPTDNEPISSSDGASSPYQVTDTTEPQQTLTP). Residues 455-458 (WAND), Q474, 513-514 (FS), 581-582 (RD), and D783 contribute to the substrate site. D458 is a catalytic residue. An involved in binding of sugars with beta-(2,6) linkages or binding of molecular weight fructans region spans residues 867 to 871 (ASVEV). Residues 924–1002 (PVAMNTTTAK…SKENPSLSKT (79 aa)) form the BIG2 domain. A compositionally biased stretch (polar residues) spans 1368–1385 (DVNSVQQTEPSVMSSSPK). The interval 1368–1394 (DVNSVQQTEPSVMSSSPKATLPDTGDH) is disordered. The short motif at 1388 to 1392 (LPDTG) is the LPXTG sorting signal element. A Pentaglycyl murein peptidoglycan amidated threonine modification is found at T1391. Positions 1392-1423 (GDHKTDLSQLGVLAMIGSFLVEIAGYFKKRKD) are cleaved as a propeptide — removed by sortase.

It belongs to the glycosyl hydrolase 32 family.

It is found in the secreted. It localises to the cell wall. It catalyses the reaction Hydrolysis of terminal, non-reducing (2-&gt;1)- and (2-&gt;6)-linked beta-D-fructofuranose residues in fructans.. Its function is as follows. This protein is a fructanase enzyme which degrades levans and inulins to fructose and also cleaves sucrose into glucose and fructose and can therefore function as an extracellular invertase. The sequence is that of Fructan beta-fructosidase (fruA) from Streptococcus mutans serotype c (strain ATCC 700610 / UA159).